Reading from the N-terminus, the 307-residue chain is MNSTTCNSTLTWPASVNNFFIIYSALLLVLGLLLNSVALWVFCYRMHQWTETRIYMTNLAVADLCLLCSLPFVLYSLKYSSSDTPVCQLSQGIYLANRYMSISLVTAIAVDRYVAVRHPLRARELRSPRQAAAVCVALWVIVVTSLVVRWRLGMQEGGFCFSSQTRRNFSTTAFSLLGFYLPLAIVVFCSLQVVTVLSRRPAADVGQAEATQKATHMVWANLAVFVICFLPLHVVLTVQVSLNLNTCAARDTFSRALSITGKLSDTNCCLDAICYYYMAREFQEASKPATSSNTPHKSQDSQILSLT.

Residues 1–18 (MNSTTCNSTLTWPASVNN) are Extracellular-facing. Residues N2 and N7 are each glycosylated (N-linked (GlcNAc...) asparagine). Residues 19–39 (FFIIYSALLLVLGLLLNSVAL) form a helical membrane-spanning segment. Residues 40–53 (WVFCYRMHQWTETR) are Cytoplasmic-facing. A helical membrane pass occupies residues 54 to 74 (IYMTNLAVADLCLLCSLPFVL). The Extracellular segment spans residues 75-88 (YSLKYSSSDTPVCQ). The cysteines at positions 87 and 160 are disulfide-linked. A helical membrane pass occupies residues 89–110 (LSQGIYLANRYMSISLVTAIAV). The Cytoplasmic segment spans residues 111-129 (DRYVAVRHPLRARELRSPR). The chain crosses the membrane as a helical span at residues 130–150 (QAAAVCVALWVIVVTSLVVRW). Residues 151 to 176 (RLGMQEGGFCFSSQTRRNFSTTAFSL) lie on the Extracellular side of the membrane. A helical membrane pass occupies residues 177-197 (LGFYLPLAIVVFCSLQVVTVL). At 198-217 (SRRPAADVGQAEATQKATHM) the chain is on the cytoplasmic side. The chain crosses the membrane as a helical span at residues 218 to 238 (VWANLAVFVICFLPLHVVLTV). At 239 to 257 (QVSLNLNTCAARDTFSRAL) the chain is on the extracellular side. The helical transmembrane segment at 258–278 (SITGKLSDTNCCLDAICYYYM) threads the bilayer. At 279–307 (AREFQEASKPATSSNTPHKSQDSQILSLT) the chain is on the cytoplasmic side. A phosphoserine mark is found at S286, S292, S298, and S301. Residues 288 to 307 (PATSSNTPHKSQDSQILSLT) form a disordered region.

This sequence belongs to the G-protein coupled receptor 1 family. Post-translationally, multiply phosphorylated in clusters of serines and threonines in the C-terminal tail. Phosphorylation of Ser-298 and Ser-301 is mediated by GRK5 and/or GRK6. Predominantly expressed in immune and gastrointestinal tissues. Strongly GPR35 expressed in colonic macrophages.

Its subcellular location is the cell membrane. G-protein coupled receptor that binds to several ligands including the tryptophan metabolite kynurenic acid (KYNA), lysophosphatidic acid (LPA) or 5-hydroxyindoleacetic acid (5-HIAA) with high affinity, leading to rapid and transient activation of numerous intracellular signaling pathways. Plays a role in neutrophil recruitment to sites of inflammation and bacterial clearance through the major serotonin metabolite 5-HIAA that acts as a physiological ligand. Stimulates lipid metabolism, thermogenic, and anti-inflammatory gene expression in adipose tissue once activated by kynurenic acid. In macrophages, activation by lysophosphatidic acid promotes GPR35-induced signaling with a distinct transcriptional profile characterized by TNF production associated with ERK and NF-kappa-B activation. In turn, induces chemotaxis of macrophages. This Mus musculus (Mouse) protein is G-protein coupled receptor 35 (Gpr35).